The following is a 329-amino-acid chain: 4-hydroxythreonine-4-phosphate dehydrogenase (329 aa).

The substrate site is built by His136 and Thr137. Residues His166, His211, and His266 each contribute to the a divalent metal cation site. Residues Lys274, Asn283, and Arg292 each contribute to the substrate site.

The protein belongs to the PdxA family. Homodimer. Zn(2+) serves as cofactor. Mg(2+) is required as a cofactor. It depends on Co(2+) as a cofactor.

The protein localises to the cytoplasm. It carries out the reaction 4-(phosphooxy)-L-threonine + NAD(+) = 3-amino-2-oxopropyl phosphate + CO2 + NADH. It functions in the pathway cofactor biosynthesis; pyridoxine 5'-phosphate biosynthesis; pyridoxine 5'-phosphate from D-erythrose 4-phosphate: step 4/5. In terms of biological role, catalyzes the NAD(P)-dependent oxidation of 4-(phosphooxy)-L-threonine (HTP) into 2-amino-3-oxo-4-(phosphooxy)butyric acid which spontaneously decarboxylates to form 3-amino-2-oxopropyl phosphate (AHAP). The chain is 4-hydroxythreonine-4-phosphate dehydrogenase from Escherichia coli O139:H28 (strain E24377A / ETEC).